The chain runs to 602 residues: Aspartate--tRNA(Asp/Asn) ligase (602 aa).

E175 contributes to the L-aspartate binding site. The interval 199-202 (QIFK) is aspartate. An L-aspartate-binding site is contributed by R221. ATP-binding positions include 221–223 (RDE) and Q230. L-aspartate is bound at residue H458. E492 provides a ligand contact to ATP. L-aspartate is bound at residue R499. 544-547 (GLDR) contacts ATP.

The protein belongs to the class-II aminoacyl-tRNA synthetase family. Type 1 subfamily. As to quaternary structure, homodimer.

The protein localises to the cytoplasm. It carries out the reaction tRNA(Asx) + L-aspartate + ATP = L-aspartyl-tRNA(Asx) + AMP + diphosphate. Its function is as follows. Aspartyl-tRNA synthetase with relaxed tRNA specificity since it is able to aspartylate not only its cognate tRNA(Asp) but also tRNA(Asn). Reaction proceeds in two steps: L-aspartate is first activated by ATP to form Asp-AMP and then transferred to the acceptor end of tRNA(Asp/Asn). The sequence is that of Aspartate--tRNA(Asp/Asn) ligase from Cupriavidus pinatubonensis (strain JMP 134 / LMG 1197) (Cupriavidus necator (strain JMP 134)).